The following is a 108-amino-acid chain: ATP-dependent Clp protease adapter protein ClpS (108 aa).

It belongs to the ClpS family. As to quaternary structure, binds to the N-terminal domain of the chaperone ClpA.

Its function is as follows. Involved in the modulation of the specificity of the ClpAP-mediated ATP-dependent protein degradation. The polypeptide is ATP-dependent Clp protease adapter protein ClpS (Cupriavidus metallidurans (strain ATCC 43123 / DSM 2839 / NBRC 102507 / CH34) (Ralstonia metallidurans)).